A 131-amino-acid polypeptide reads, in one-letter code: NADPH-dependent 7-cyano-7-deazaguanine reductase (131 aa).

Cys-47 (thioimide intermediate) is an active-site residue. The active-site Proton donor is Asp-54. Substrate is bound by residues 69–71 (MEL) and 88–89 (HE).

The protein belongs to the GTP cyclohydrolase I family. QueF type 1 subfamily.

It localises to the cytoplasm. It carries out the reaction 7-aminomethyl-7-carbaguanine + 2 NADP(+) = 7-cyano-7-deazaguanine + 2 NADPH + 3 H(+). It functions in the pathway tRNA modification; tRNA-queuosine biosynthesis. In terms of biological role, catalyzes the NADPH-dependent reduction of 7-cyano-7-deazaguanine (preQ0) to 7-aminomethyl-7-deazaguanine (preQ1). The sequence is that of NADPH-dependent 7-cyano-7-deazaguanine reductase from Microcystis aeruginosa (strain NIES-843 / IAM M-2473).